The sequence spans 701 residues: Arachidonate 12-lipoxygenase, 12R-type (701 aa).

The PLAT domain occupies 2 to 119 (ATYKVKVATG…TLSLREATGK (118 aa)). The 582-residue stretch at 120-701 (TTADDTLPIL…PVLIENSISI (582 aa)) folds into the Lipoxygenase domain. H398, H403, H578, N582, and I701 together coordinate Fe cation.

It belongs to the lipoxygenase family. It depends on Fe cation as a cofactor.

Its subcellular location is the cytoplasm. The protein resides in the perinuclear region. The catalysed reaction is (5Z,8Z,11Z,14Z)-eicosatetraenoate + O2 = (12R)-hydroperoxy-(5Z,8Z,10E,14Z)-eicosatetraenoate. It carries out the reaction N-[omega-(9Z,12Z)-octadecadienoyloxy]acyl-beta-D-glucosyl-(1&lt;-&gt;1)-octadecasphing-4E-enine + O2 = N-[omega-(9R)-hydroperoxy-(10E,12Z)-octadecadienoyloxy]acyl-beta-D-glucosyl-(1&lt;-&gt;1)-octadecasphing-4E-enine. The enzyme catalyses a N-[omega-(9Z,12Z)-octadecadienoyloxy]-acylsphin-4E-enine + O2 = a N-[omega-(9R)-hydroperoxy-(10E,12Z)-octadecadienoyloxy]-acylsphin-4E-enine. It catalyses the reaction (6Z,9Z,12Z)-octadecatrienoate + O2 = 10-hydroperoxy-(6Z,8E,12Z)-octadecatrienoate. The catalysed reaction is (4Z,7Z,10Z,13Z,16Z,19Z)-docosahexaenoate + O2 = 14-hydroperoxy-(4Z,7Z,10Z,12E,16Z,19Z)-docosahexaenoate. It carries out the reaction (8Z,11Z,14Z)-eicosatrienoate + O2 = (8Z,10E,14Z)-12-hydroperoxyeicosatrienoate. The enzyme catalyses (5Z,8Z,11Z,14Z,17Z)-eicosapentaenoate + O2 = (5Z,7Z,8Z,10E,14Z,17Z)-12-hydroperoxyeicosapentaenoate. It catalyses the reaction (6Z,9Z,12Z)-octadecatrienoate + O2 = 10R-hydroperoxy-(6Z,8E,12Z)-octadecatrienoate. The catalysed reaction is 1-O-methyl-(5Z,8Z,11Z,14Z)-eicosatetraenoate + O2 = 1-O-methyl (5Z,8Z,10E,12R,14Z)-hydroperoxyiecosatetraenoate. It carries out the reaction 1-O-methyl-(5Z,8Z,11Z,14Z)-eicosatetraenoate + O2 = 1-O-methyl-8-hydroperoxy-(5Z,9E,11Z,14Z)-eicosatetraenoate. The enzyme catalyses 1-O-methyl-(5Z,8Z,11Z,14Z)-eicosatetraenoate + O2 = 1-O-methyl-(8R)-hydroperoxy-(5Z,9E,11Z,14Z)-eicosatrienoate. It catalyses the reaction 1-O-methyl-(9Z,12Z)-octadecadienoate + O2 = 1-O-methyl-(9R)-hydroperoxy-(10E,12Z)-octadecadienoate. The catalysed reaction is 1-O-methyl-20-hydroxy-(5Z,8Z,11Z,14Z)-eicosatetraenoate + O2 = 1-O-methyl-8-hydroperoxy-20-hydroxy-(5Z,9E,11Z,14Z)-eicosatetraenoate. It carries out the reaction 1-O-methyl-20-hydroxy-(5Z,8Z,11Z,14Z)-eicosatetraenoate + O2 = 1-O-methyl-12-hydroperoxy-20-hydroxy-(5Z,8Z,10E,14Z)-eicosatetraenoate. The enzyme catalyses 1-O-methyl-20-hydroxy-(5Z,8Z,11Z,14Z)-eicosatetraenoate + O2 = 1-O-methyl-9-hydroperoxy-20-hydroxy-(5Z,7E,11Z,14Z)-eicosatetraenoate. It catalyses the reaction 1-O-methyl-(9Z,12Z)-octadecadienoate + O2 = 1-O-methyl-(13S)-hydroperoxy-(9Z,11E)-octadecadienoate. Its pathway is lipid metabolism; hydroperoxy eicosatetraenoic acid biosynthesis. It functions in the pathway lipid metabolism; sphingolipid metabolism. Increased by calcium. Functionally, catalyzes the regio and stereo-specific incorporation of a single molecule of dioxygen into free and esterified polyunsaturated fatty acids generating lipid hydroperoxides that can be further reduced to the corresponding hydroxy species. In the skin, acts upstream of ALOXE3 on the lineolate moiety of esterified omega-hydroxyacyl-sphingosine (EOS) ceramides to produce an epoxy-ketone derivative, a crucial step in the conjugation of omega-hydroxyceramide to membrane proteins. Therefore plays a crucial role in the synthesis of corneocytes lipid envelope and the establishment of the skin barrier to water loss. May also play a role in the regulation of the expression of airway mucins. In Rattus norvegicus (Rat), this protein is Arachidonate 12-lipoxygenase, 12R-type.